A 482-amino-acid chain; its full sequence is Protein farnesyltransferase subunit beta (482 aa).

PFTB repeat units lie at residues 131-172 (ESNA…VTLG), 182-223 (REKM…SILN), 230-271 (TQGL…ILIN), and 278-319 (LDSL…VLLQ). Residues 256-259 (HGGY) and 298-301 (RTNK) contribute to the (2E,6E)-farnesyl diphosphate site. Positions 304 and 306 each coordinate Zn(2+). A (2E,6E)-farnesyl diphosphate-binding site is contributed by 307 to 310 (YTFW). The segment at 329–372 (VHGSSHISEGTNEEHHAHDEDDLEDSDDDDDSDEDNDEDSVNGH) is disordered. The segment covering 348–368 (EDDLEDSDDDDDSDEDNDEDS) has biased composition (acidic residues). The PFTB 5 repeat unit spans residues 391–433 (SLGLQRYVLLCSKIPDGGFRDKPRKPRDFYHTCYCLSGLSVAQ). Residue His421 coordinates Zn(2+).

It belongs to the protein prenyltransferase subunit beta family. In terms of assembly, heterodimer of FTA and FTB (farnesyltransferase). Heterodimer of an alpha and a beta subunit. Zn(2+) is required as a cofactor.

The enzyme catalyses L-cysteinyl-[protein] + (2E,6E)-farnesyl diphosphate = S-(2E,6E)-farnesyl-L-cysteinyl-[protein] + diphosphate. Its function is as follows. Catalyzes the transfer of a farnesyl moiety from farnesyl diphosphate to a cysteine at the fourth position from the C-terminus of several proteins having the C-terminal sequence Cys-aliphatic-aliphatic-X (CaaX). The beta subunit is responsible for peptide-binding. Acts as an abscisic acid (ABA) negative regulator by mediating ASG2 farnesylation and consequently monitoring its subcellular localization. Involved in responses to salt (NaCl) and osmotic (e.g. in response to mannitol and PEG) stresses. The protein is Protein farnesyltransferase subunit beta (FTB) of Arabidopsis thaliana (Mouse-ear cress).